Reading from the N-terminus, the 202-residue chain is ATP-dependent Clp protease proteolytic subunit 3 (202 aa).

The active-site Nucleophile is the Ser93. His118 is an active-site residue.

The protein belongs to the peptidase S14 family. In terms of assembly, fourteen ClpP subunits assemble into 2 heptameric rings which stack back to back to give a disk-like structure with a central cavity, resembling the structure of eukaryotic proteasomes.

It localises to the cytoplasm. It catalyses the reaction Hydrolysis of proteins to small peptides in the presence of ATP and magnesium. alpha-casein is the usual test substrate. In the absence of ATP, only oligopeptides shorter than five residues are hydrolyzed (such as succinyl-Leu-Tyr-|-NHMec, and Leu-Tyr-Leu-|-Tyr-Trp, in which cleavage of the -Tyr-|-Leu- and -Tyr-|-Trp bonds also occurs).. Cleaves peptides in various proteins in a process that requires ATP hydrolysis. Has a chymotrypsin-like activity. Plays a major role in the degradation of misfolded proteins. This is ATP-dependent Clp protease proteolytic subunit 3 from Rhodococcus jostii (strain RHA1).